We begin with the raw amino-acid sequence, 437 residues long: Endoplasmic reticulum protein SC65 (437 aa).

A signal peptide spans 1–18 (MARVAWGLLWLLLGSAGA). Asn361 is a glycosylation site (N-linked (GlcNAc...) asparagine). Composition is skewed to acidic residues over residues 381–413 (DEMELEETEPPLEPEDALSDAEFEGEGDYEEGM) and 428–437 (AEAEPEPELA). The disordered stretch occupies residues 381–437 (DEMELEETEPPLEPEDALSDAEFEGEGDYEEGMYADWWQEPDAKGDEAEAEPEPELA).

This sequence belongs to the leprecan family. As to quaternary structure, interacts with PLOD1, P3H3 and PPIB. Identified in a complex with PLOD1 and P3H3. In terms of tissue distribution, detected in fibroblasts (at protein level). Detected in spleen, prostate, testis, ovary, colon, pancreas, kidney, placenta and heart.

Its subcellular location is the endoplasmic reticulum. Part of a complex composed of PLOD1, P3H3 and P3H4 that catalyzes hydroxylation of lysine residues in collagen alpha chains and is required for normal assembly and cross-linking of collagen fibrils. Required for normal bone density and normal skin stability via its role in hydroxylation of lysine residues in collagen alpha chains and in collagen fibril assembly. The polypeptide is Endoplasmic reticulum protein SC65 (Homo sapiens (Human)).